Here is a 335-residue protein sequence, read N- to C-terminus: Mitochondrial amidoxime reducing component 2 (335 aa).

The N-terminal 35 residues, Met1–Leu35, are a transit peptide targeting the mitochondrion. Residues Lys59, Lys138, and Lys144 each participate in a glycyl lysine isopeptide (Lys-Gly) (interchain with G-Cter in ubiquitin) cross-link. Lys156 carries the post-translational modification N6-acetyllysine; alternate. A Glycyl lysine isopeptide (Lys-Gly) (interchain with G-Cter in ubiquitin); alternate cross-link involves residue Lys156. Glycyl lysine isopeptide (Lys-Gly) (interchain with G-Cter in ubiquitin) cross-links involve residues Lys166, Lys173, Lys187, Lys287, and Lys294. Positions Gly188 to Met334 constitute an MOSC domain.

In terms of assembly, component of a complex composed of cytochrome b5, NADH-cytochrome b5 reductase (CYB5R3) and MTARC2. Requires Mo-molybdopterin as cofactor. Post-translationally, ubiquitinated by PRKN during mitophagy, leading to its degradation and enhancement of mitophagy. Deubiquitinated by USP30.

The protein localises to the mitochondrion outer membrane. It is found in the peroxisome. It catalyses the reaction N(omega)-hydroxy-L-arginine + 2 Fe(II)-[cytochrome b5] + 2 H(+) = L-arginine + 2 Fe(III)-[cytochrome b5] + H2O. Its function is as follows. Catalyzes the reduction of N-oxygenated molecules, acting as a counterpart of cytochrome P450 and flavin-containing monooxygenases in metabolic cycles. As a component of prodrug-converting system, reduces a multitude of N-hydroxylated prodrugs particularly amidoximes, leading to increased drug bioavailability. May be involved in mitochondrial N(omega)-hydroxy-L-arginine (NOHA) reduction, regulating endogenous nitric oxide levels and biosynthesis. Postulated to cleave the N-OH bond of N-hydroxylated substrates in concert with electron transfer from NADH to cytochrome b5 reductase then to cytochrome b5, the ultimate electron donor that primes the active site for substrate reduction. The chain is Mitochondrial amidoxime reducing component 2 from Homo sapiens (Human).